The chain runs to 198 residues: Na(+)-translocating NADH-quinone reductase subunit E (198 aa).

6 helical membrane-spanning segments follow: residues 11–31 (AVFIENMALSFFLGMCTFLAV), 35–55 (VSTAFGLGIAVTFVLGIAVPV), 77–97 (FLNFITFIGVIAGLVQILEMV), 110–130 (GIFLPLIAVNCAIFGGVSFMV), 140–160 (IVYGFGSGLGWMLAIVALAGL), and 176–196 (LGITFISVGLMALGFMSFSGI).

It belongs to the NqrDE/RnfAE family. Composed of six subunits; NqrA, NqrB, NqrC, NqrD, NqrE and NqrF.

It localises to the cell inner membrane. It catalyses the reaction a ubiquinone + n Na(+)(in) + NADH + H(+) = a ubiquinol + n Na(+)(out) + NAD(+). In terms of biological role, NQR complex catalyzes the reduction of ubiquinone-1 to ubiquinol by two successive reactions, coupled with the transport of Na(+) ions from the cytoplasm to the periplasm. NqrA to NqrE are probably involved in the second step, the conversion of ubisemiquinone to ubiquinol. The sequence is that of Na(+)-translocating NADH-quinone reductase subunit E from Haemophilus influenzae (strain 86-028NP).